The primary structure comprises 283 residues: Pantothenate synthetase (283 aa).

30–37 (MGNLHNGH) is a binding site for ATP. Histidine 37 functions as the Proton donor in the catalytic mechanism. Glutamine 61 is a (R)-pantoate binding site. Glutamine 61 contacts beta-alanine. 149–152 (GEKD) is a binding site for ATP. Glutamine 155 is a (R)-pantoate binding site. 186–189 (LSSR) is a binding site for ATP.

This sequence belongs to the pantothenate synthetase family. As to quaternary structure, homodimer.

The protein resides in the cytoplasm. The enzyme catalyses (R)-pantoate + beta-alanine + ATP = (R)-pantothenate + AMP + diphosphate + H(+). It functions in the pathway cofactor biosynthesis; (R)-pantothenate biosynthesis; (R)-pantothenate from (R)-pantoate and beta-alanine: step 1/1. Its function is as follows. Catalyzes the condensation of pantoate with beta-alanine in an ATP-dependent reaction via a pantoyl-adenylate intermediate. The chain is Pantothenate synthetase from Shigella flexneri serotype 5b (strain 8401).